A 355-amino-acid polypeptide reads, in one-letter code: UDP-glucose 4-epimerase uge1 (355 aa).

Thr-8–Leu-39 is an NAD(+) binding site.

It belongs to the NAD(P)-dependent epimerase/dehydratase family. The cofactor is NAD(+).

The catalysed reaction is UDP-alpha-D-glucose = UDP-alpha-D-galactose. It functions in the pathway carbohydrate metabolism; galactose metabolism. In terms of biological role, major UDP-glucose/-galactose 4-epimerase under glucose-rich conditions involved in protein galactosylation. This chain is UDP-glucose 4-epimerase uge1 (uge1), found in Schizosaccharomyces pombe (strain 972 / ATCC 24843) (Fission yeast).